Here is a 369-residue protein sequence, read N- to C-terminus: Protein RecA (369 aa).

77 to 84 (GPESSGKT) provides a ligand contact to ATP.

Belongs to the RecA family.

Its subcellular location is the cytoplasm. In terms of biological role, can catalyze the hydrolysis of ATP in the presence of single-stranded DNA, the ATP-dependent uptake of single-stranded DNA by duplex DNA, and the ATP-dependent hybridization of homologous single-stranded DNAs. It interacts with LexA causing its activation and leading to its autocatalytic cleavage. The chain is Protein RecA from Corynebacterium pseudotuberculosis (strain C231).